The primary structure comprises 154 residues: Myoglobin (154 aa).

The 147-residue stretch at 2 to 148 folds into the Globin domain; sequence GLSDGEWQSV…FRNDIAAKYK (147 aa). The residue at position 4 (serine 4) is a Phosphoserine. Histidine 65 contributes to the nitrite binding site. Residue histidine 65 coordinates O2. Threonine 68 is modified (phosphothreonine). Heme b is bound at residue histidine 94.

The protein belongs to the globin family. As to quaternary structure, monomeric.

It is found in the cytoplasm. The protein localises to the sarcoplasm. The enzyme catalyses Fe(III)-heme b-[protein] + nitric oxide + H2O = Fe(II)-heme b-[protein] + nitrite + 2 H(+). The catalysed reaction is H2O2 + AH2 = A + 2 H2O. In terms of biological role, monomeric heme protein which primary function is to store oxygen and facilitate its diffusion within muscle tissues. Reversibly binds oxygen through a pentacoordinated heme iron and enables its timely and efficient release as needed during periods of heightened demand. Depending on the oxidative conditions of tissues and cells, and in addition to its ability to bind oxygen, it also has a nitrite reductase activity whereby it regulates the production of bioactive nitric oxide. Under stress conditions, like hypoxia and anoxia, it also protects cells against reactive oxygen species thanks to its pseudoperoxidase activity. The chain is Myoglobin (MB) from Perodicticus potto edwarsi (Potto).